Reading from the N-terminus, the 286-residue chain is ATP synthase gamma chain (286 aa).

This sequence belongs to the ATPase gamma chain family. As to quaternary structure, F-type ATPases have 2 components, CF(1) - the catalytic core - and CF(0) - the membrane proton channel. CF(1) has five subunits: alpha(3), beta(3), gamma(1), delta(1), epsilon(1). CF(0) has three main subunits: a, b and c.

The protein localises to the cell inner membrane. In terms of biological role, produces ATP from ADP in the presence of a proton gradient across the membrane. The gamma chain is believed to be important in regulating ATPase activity and the flow of protons through the CF(0) complex. The chain is ATP synthase gamma chain from Pseudoalteromonas translucida (strain TAC 125).